Consider the following 276-residue polypeptide: 4-deoxy-L-threo-5-hexosulose-uronate ketol-isomerase (276 aa).

Zn(2+) is bound by residues histidine 194, histidine 196, glutamate 201, and histidine 243.

The protein belongs to the KduI family. It depends on Zn(2+) as a cofactor.

It catalyses the reaction 5-dehydro-4-deoxy-D-glucuronate = 3-deoxy-D-glycero-2,5-hexodiulosonate. It participates in glycan metabolism; pectin degradation; 2-dehydro-3-deoxy-D-gluconate from pectin: step 4/5. Its function is as follows. Catalyzes the isomerization of 5-dehydro-4-deoxy-D-glucuronate to 3-deoxy-D-glycero-2,5-hexodiulosonate. This is 4-deoxy-L-threo-5-hexosulose-uronate ketol-isomerase from Lachnoclostridium phytofermentans (strain ATCC 700394 / DSM 18823 / ISDg) (Clostridium phytofermentans).